A 645-amino-acid chain; its full sequence is ATP-dependent zinc metalloprotease FtsH (645 aa).

At 1–6 the chain is on the cytoplasmic side; it reads MDQRPK. A helical membrane pass occupies residues 7 to 27; it reads FGMILFYIVLGVFLMVALRGL. The Periplasmic segment spans residues 28–110; it reads YTTDTNLSVP…VVYEKGNDSL (83 aa). The chain crosses the membrane as a helical span at residues 111–131; it reads FWVNLLGTIIPLAIIVFIWFF. The Cytoplasmic segment spans residues 132–645; that stretch reads AMRSLSGRNS…AKEGNEDEKN (514 aa). 204-211 provides a ligand contact to ATP; the sequence is GPPGTGKT. His-426 lines the Zn(2+) pocket. Glu-427 is a catalytic residue. Zn(2+) is bound by residues His-430 and Asp-503. The tract at residues 623–645 is disordered; sequence SKRKVSAVSTNEEAKEGNEDEKN. Over residues 634–645 the composition is skewed to basic and acidic residues; the sequence is EEAKEGNEDEKN.

It in the central section; belongs to the AAA ATPase family. In the C-terminal section; belongs to the peptidase M41 family. As to quaternary structure, homohexamer. Zn(2+) serves as cofactor.

The protein resides in the cell inner membrane. Functionally, acts as a processive, ATP-dependent zinc metallopeptidase for both cytoplasmic and membrane proteins. Plays a role in the quality control of integral membrane proteins. The polypeptide is ATP-dependent zinc metalloprotease FtsH (Kosmotoga olearia (strain ATCC BAA-1733 / DSM 21960 / TBF 19.5.1)).